A 202-amino-acid polypeptide reads, in one-letter code: Small ribosomal subunit protein uS2 (202 aa).

It belongs to the universal ribosomal protein uS2 family.

The sequence is that of Small ribosomal subunit protein uS2 from Methanocorpusculum labreanum (strain ATCC 43576 / DSM 4855 / Z).